A 152-amino-acid polypeptide reads, in one-letter code: MLFFRGINSINMDAKGRLAIPKRYRESIAEASENQLVATIDLHSPCLLIYTMDEWEVIERKLMSLPNMDPQARLVQRLLLGHASEMEMDGQGRVLLPSLLREHAKLEKEAILLGQGNKFELWSQEAWDASRPEMLDSASVGDVSESLSSLSL.

SpoVT-AbrB domains lie at 7–54 (INSI…TMDE) and 83–126 (ASEM…SQEA).

The protein belongs to the MraZ family. In terms of assembly, forms oligomers.

The protein resides in the cytoplasm. It localises to the nucleoid. The chain is Transcriptional regulator MraZ from Hydrogenovibrio crunogenus (strain DSM 25203 / XCL-2) (Thiomicrospira crunogena).